The chain runs to 540 residues: Phenylalanine--tRNA ligase beta subunit (540 aa).

Residues 268 to 343 (LQHKSIKITA…ITYGYNNLSP (76 aa)) form the B5 domain. Mg(2+) contacts are provided by aspartate 321, aspartate 327, glutamate 330, and glutamate 331.

It belongs to the phenylalanyl-tRNA synthetase beta subunit family. Type 2 subfamily. Tetramer of two alpha and two beta subunits. It depends on Mg(2+) as a cofactor.

Its subcellular location is the cytoplasm. The enzyme catalyses tRNA(Phe) + L-phenylalanine + ATP = L-phenylalanyl-tRNA(Phe) + AMP + diphosphate + H(+). In Sulfurisphaera tokodaii (strain DSM 16993 / JCM 10545 / NBRC 100140 / 7) (Sulfolobus tokodaii), this protein is Phenylalanine--tRNA ligase beta subunit.